The primary structure comprises 319 residues: G-protein coupled receptor 171 (319 aa).

Residues 1–21 are Extracellular-facing; that stretch reads MTNSSFFCPVYKDLEPFTYFF. N-linked (GlcNAc...) asparagine glycosylation is present at N3. A helical membrane pass occupies residues 22–42; that stretch reads YLVFLVGIIGSCFATWAFIQK. At 43–48 the chain is on the cytoplasmic side; sequence NTNHRC. Residues 49–69 traverse the membrane as a helical segment; that stretch reads VSIYLINLLTADFLLTLALPV. The Extracellular segment spans residues 70-89; the sequence is KIVVDLGVAPWKLKIFHCQV. The helical transmembrane segment at 90-110 threads the bilayer; it reads TACLIYINMYLSIIFLAFVSI. The Cytoplasmic segment spans residues 111–132; sequence DRCLQLTHSCKIYRIQEPGFAK. A helical membrane pass occupies residues 133 to 153; the sequence is MISTVVWLMVLLIMVPNMMIP. The Extracellular portion of the chain corresponds to 154–181; it reads IKDIKEKSNVGCMEFKKEFGRNWHLLTN. A helical membrane pass occupies residues 182–202; that stretch reads FICVAIFLNFSAIILISNCLV. The Cytoplasmic portion of the chain corresponds to 203 to 224; that stretch reads IRQLYRNKDNENYPNVKKALIN. A helical transmembrane segment spans residues 225 to 245; sequence ILLVTTGYIICFVPYHIVRIP. Over 246-268 the chain is Extracellular; that stretch reads YTLSQTEVITDCSTRISLFKAKE. Residues 269–289 form a helical membrane-spanning segment; that stretch reads ATLLLAVSNLCFDPILYYHLS. Residues 290-319 are Cytoplasmic-facing; that stretch reads KAFRSKVTETFASPKETKAQKEKLRCENNA.

The protein belongs to the G-protein coupled receptor 1 family. Expressed in both T-cell subsets and natural killer cells, while it is undetectable in B cells or CD14(+) monocytes. Expressed in peripheral blood mononuclear cells (PBMC) and Jurkat cells (at protein level).

Its subcellular location is the cell membrane. In terms of biological role, G-protein coupled receptor for Big LEN, a 16-amino acid neuropeptide produced from the precursor protein, proSAAS (encoded by PCSK1N). Acts through a G(i)-alpha-mediated pathway in response to Big LEN. Big LEN-GPR171 system plays an important role in regulating feeding and metabolism. Also plays a role in modulating fear and anxiety-like behaviors in the basolateral amygdala. Big LEN-GPR171 modulates the mu-type opioid receptor signaling and antinociception. Acts as a negative regulator T cell function. In Homo sapiens (Human), this protein is G-protein coupled receptor 171.